We begin with the raw amino-acid sequence, 562 residues long: Tripeptidyl-peptidase 1 (562 aa).

An N-terminal signal peptide occupies residues 1–19 (MGLQARLLGLLALVIAGKC). The propeptide at 20-194 (TYNPEPDQRW…PEPQQVGTVS (175 aa)) is removed in mature form. Cys-111 and Cys-122 are joined by a disulfide. In terms of domain architecture, Peptidase S53 spans 198–562 (GVTPSVLRQR…PALLKTLLNP (365 aa)). N-linked (GlcNAc...) asparagine glycosylation occurs at Asn-209. Asn-221 carries an N-linked (GlcNAc...) (high mannose) asparagine glycan. Active-site charge relay system residues include Glu-271 and Asp-275. 3 N-linked (GlcNAc...) asparagine glycosylation sites follow: Asn-285, Asn-312, and Asn-442. 2 disulfides stabilise this stretch: Cys-364–Cys-525 and Cys-521–Cys-536. Ser-474 acts as the Charge relay system in catalysis. 2 residues coordinate Ca(2+): Asp-516 and Val-517. Gly-538, Gly-540, and Asp-542 together coordinate Ca(2+).

Monomer. Interacts with CLN5. Interacts with CLN3. It depends on Ca(2+) as a cofactor. Activated by autocatalytic proteolytical processing upon acidification. N-glycosylation is required for processing and activity.

Its subcellular location is the lysosome. The protein resides in the melanosome. It catalyses the reaction Release of an N-terminal tripeptide from a polypeptide, but also has endopeptidase activity.. Functionally, lysosomal serine protease with tripeptidyl-peptidase I activity. May act as a non-specific lysosomal peptidase which generates tripeptides from the breakdown products produced by lysosomal proteinases. Requires substrates with an unsubstituted N-terminus. In Mus musculus (Mouse), this protein is Tripeptidyl-peptidase 1 (Tpp1).